Reading from the N-terminus, the 654-residue chain is MAPHNCDRELIDLIHNFFLRSTLLICSSKLNKNQHLLEEIQKFDSDLNEKPDLPKTINEWFHDENERNLPPLVIETLLDLKKLSPNHFVTLRDDDGNVWNVCKGTKKSEIVLERWLIELDNTSAAFQSYRGTIDSTGEIRKQIVLLARYLVTLIQILPSNELEENLTKNSTNLILSLKRKVIDGSKPILSKGRIGLSKPIISTYSNVINERNIPPHLEQRKITPVYTPLGLLRISVSFRHDCRFEVNQSTDSSDNVASNTTNIHQHLEPLHNKNYTNTSLSISPHSHIALASSSERNSIGKKDLNSKPIHPFKTGSVGSCTINQSQAMIRTTSNPSVIATLRAQRSRNDSISCQSQLEDIQLESTSVGSGSKYSSSFGRIRRHSSVKSSENVEKPIRLVKQSNAPTDDLLDFVKMMDEKQELRITKCNISSNNADISNSILRFQKLKSSNEILSEDLSMSVSLEGVNASMHRRSSVSHSPIPSVSPPVQYPSIPSRLSKTNLQEQDTFKTAVVSRRNSVEKSKINISQPKTTGRIENELVDKPLFNEEHESKGEELLASGIIGPSFKRSTSPHSIESVSSLISKTKIAFQQPSYYSHPTTAAVPAYAKLHRPSVLSTDVLSEDQNKKVVQDLNNNKDEDDELLFFMSDMNLSKI.

It belongs to the ATG13 family. Fungi subfamily. In terms of assembly, interacts with ATG1 to form the ATG1-ATG13 kinase complex.

It localises to the cytoplasm. The protein localises to the preautophagosomal structure. Functionally, activates the ATG1 kinase in a nutritional condition dependent manner through the TOR pathway, leading to autophagy. Also involved in cytoplasm to vacuole transport (Cvt) and more specifically in Cvt vesicle formation. Seems to play a role in the switching machinery regulating the conversion between the Cvt pathway and autophagy. Finally, ATG13 is also required for glycogen storage during stationary phase. This Vanderwaltozyma polyspora (strain ATCC 22028 / DSM 70294 / BCRC 21397 / CBS 2163 / NBRC 10782 / NRRL Y-8283 / UCD 57-17) (Kluyveromyces polysporus) protein is Autophagy-related protein 13 (ATG13).